A 507-amino-acid polypeptide reads, in one-letter code: ATP synthase subunit alpha, chloroplastic (507 aa).

ATP is bound at residue 170-177; the sequence is GDRQTGKT.

It belongs to the ATPase alpha/beta chains family. As to quaternary structure, F-type ATPases have 2 components, CF(1) - the catalytic core - and CF(0) - the membrane proton channel. CF(1) has five subunits: alpha(3), beta(3), gamma(1), delta(1), epsilon(1). CF(0) has four main subunits: a, b, b' and c.

The protein resides in the plastid. The protein localises to the chloroplast thylakoid membrane. It catalyses the reaction ATP + H2O + 4 H(+)(in) = ADP + phosphate + 5 H(+)(out). Produces ATP from ADP in the presence of a proton gradient across the membrane. The alpha chain is a regulatory subunit. In Nymphaea alba (White water-lily), this protein is ATP synthase subunit alpha, chloroplastic.